A 709-amino-acid chain; its full sequence is Disintegrin and metalloproteinase domain-containing protein 5 (709 aa).

Positions 1–98 (MKTPISSILK…TLSGFIHVIY (98 aa)) are excised as a propeptide. Residues 1-649 (MKTPISSILK…QQNRGIHPKQ (649 aa)) are Extracellular-facing. Residues 141–334 (RYIKTDIVVD…QDLECLQDLP (194 aa)) form the Peptidase M12B domain. 7 cysteine pairs are disulfide-bonded: cysteine 247/cysteine 329, cysteine 289/cysteine 314, cysteine 291/cysteine 296, cysteine 406/cysteine 426, cysteine 585/cysteine 597, cysteine 591/cysteine 603, and cysteine 605/cysteine 614. Residues 346–434 (RRICGNGILE…YCVPDTFARN (89 aa)) enclose the Disintegrin domain. In terms of domain architecture, EGF-like; calcium-binding spans 581–615 (DFQQCNTSRDCNDHGVCNNFNHCHCDKGYNPPYCE). A helical membrane pass occupies residues 650-670 (QLQLILYITLPLIMIISAVFI). Topologically, residues 671–709 (KQSKLSRLCGRERSEGTSCITEDSVSNTKMTTNEGSTLH) are cytoplasmic. The interval 690-709 (ITEDSVSNTKMTTNEGSTLH) is disordered.

In terms of assembly, interacts with TEX101. As to expression, detected in testis.

Its subcellular location is the membrane. In terms of biological role, this is a non catalytic metalloprotease-like protein. May play a role in sperm-egg fusion. The sequence is that of Disintegrin and metalloproteinase domain-containing protein 5 (Adam5) from Rattus norvegicus (Rat).